Here is a 131-residue protein sequence, read N- to C-terminus: Protein FAM107B (131 aa).

Position 2 is an N-acetylalanine (Ala2). Disordered regions lie at residues 39-78 and 100-131; these read MNQKRGLAPQNKPELQKVMEKRKRDQVIKQKEEEAQKKKS and KLQEEQENAPEFVKVKGNLRRTGQEVAQAQES. The residue at position 50 (Lys50) is an N6-acetyllysine. A compositionally biased stretch (basic and acidic residues) spans 52 to 78; it reads ELQKVMEKRKRDQVIKQKEEEAQKKKS. Positions 61-112 form a coiled coil; sequence KRDQVIKQKEEEAQKKKSDLEIELLKRQQKLEQLELEKQKLQEEQENAPEFV.

It belongs to the FAM107 family.

The protein is Protein FAM107B of Homo sapiens (Human).